The following is a 309-amino-acid chain: Porphobilinogen deaminase (309 aa).

Cys-242 carries the S-(dipyrrolylmethanemethyl)cysteine modification.

Belongs to the HMBS family. As to quaternary structure, monomer. The cofactor is dipyrromethane.

It carries out the reaction 4 porphobilinogen + H2O = hydroxymethylbilane + 4 NH4(+). It participates in porphyrin-containing compound metabolism; protoporphyrin-IX biosynthesis; coproporphyrinogen-III from 5-aminolevulinate: step 2/4. Functionally, tetrapolymerization of the monopyrrole PBG into the hydroxymethylbilane pre-uroporphyrinogen in several discrete steps. In Hamiltonella defensa subsp. Acyrthosiphon pisum (strain 5AT), this protein is Porphobilinogen deaminase.